Consider the following 248-residue polypeptide: MSLCSLAFTLFLTVVAGIKCNVTDVCAGSPGIPGAPGNHGLPGRDGRDGVKGDPGPPGPMGPPGGMPGLPGRDGLPGAPGAPGERGDKGEPGERGLPGFPAYLDEELQTELYEIKHQILQTMGVLSLQGSMLSVGDKVFSTNGQSVNFDTIKEMCTRAGGNIAVPRTPEENEAIASIAKKYNNYVYLGMIEDQTPGDFHYLDGASVNYTNWYPGEPRGQGKEKCVEMYTDGTWNDRGCLQYRLAVCEF.

Positions 1–20 (MSLCSLAFTLFLTVVAGIKC) are cleaved as a signal peptide. The Collagen-like domain maps to 28–100 (GSPGIPGAPG…PGERGLPGFP (73 aa)). A 4-hydroxyproline mark is found at proline 30, proline 33, proline 36, proline 42, proline 54, proline 57, proline 63, proline 67, proline 70, and proline 76. A disordered region spans residues 31-99 (GIPGAPGNHG…EPGERGLPGF (69 aa)). Positions 42-51 (PGRDGRDGVK) are enriched in basic and acidic residues. Positions 54-65 (PGPPGPMGPPGG) are enriched in pro residues. Low complexity predominate over residues 69 to 82 (LPGRDGLPGAPGAP). The segment covering 84–93 (ERGDKGEPGE) has biased composition (basic and acidic residues). In terms of domain architecture, C-type lectin spans 133 to 248 (SVGDKVFSTN…LQYRLAVCEF (116 aa)). Disulfide bonds link cysteine 155-cysteine 246 and cysteine 224-cysteine 238. Asparagine 207 carries N-linked (GlcNAc...) asparagine glycosylation. The Ca(2+) site is built by glutamate 215, arginine 217, asparagine 234, and aspartate 235.

Belongs to the SFTPA family. In terms of assembly, oligomeric complex of 6 set of homotrimers.

It is found in the secreted. Its subcellular location is the extracellular space. The protein resides in the extracellular matrix. It localises to the surface film. In terms of biological role, in presence of calcium ions, it binds to surfactant phospholipids and contributes to lower the surface tension at the air-liquid interface in the alveoli of the mammalian lung and is essential for normal respiration. Enhances the expression of MYO18A/SP-R210 on alveolar macrophages. This chain is Pulmonary surfactant-associated protein A (Sftpa1), found in Rattus norvegicus (Rat).